We begin with the raw amino-acid sequence, 691 residues long: Elongation factor G (691 aa).

Residues 8–282 (ERVRNIGIAA…AVVDYLPAPI (275 aa)) form the tr-type G domain. Residues 17 to 24 (AHIDAGKT), 81 to 85 (DTPGH), and 135 to 138 (NKMD) each bind GTP.

This sequence belongs to the TRAFAC class translation factor GTPase superfamily. Classic translation factor GTPase family. EF-G/EF-2 subfamily.

The protein localises to the cytoplasm. Catalyzes the GTP-dependent ribosomal translocation step during translation elongation. During this step, the ribosome changes from the pre-translocational (PRE) to the post-translocational (POST) state as the newly formed A-site-bound peptidyl-tRNA and P-site-bound deacylated tRNA move to the P and E sites, respectively. Catalyzes the coordinated movement of the two tRNA molecules, the mRNA and conformational changes in the ribosome. This chain is Elongation factor G, found in Synechococcus sp. (strain CC9902).